A 168-amino-acid polypeptide reads, in one-letter code: Protein-export protein SecB (168 aa).

The segment at 1-20 (MTDETAANGENEAGRQSQSS) is disordered.

Belongs to the SecB family. In terms of assembly, homotetramer, a dimer of dimers. One homotetramer interacts with 1 SecA dimer.

Its subcellular location is the cytoplasm. Its function is as follows. One of the proteins required for the normal export of preproteins out of the cell cytoplasm. It is a molecular chaperone that binds to a subset of precursor proteins, maintaining them in a translocation-competent state. It also specifically binds to its receptor SecA. This Rhodospirillum centenum (strain ATCC 51521 / SW) protein is Protein-export protein SecB.